A 411-amino-acid polypeptide reads, in one-letter code: Putative competence-damage inducible protein (411 aa).

Belongs to the CinA family.

This Caldicellulosiruptor saccharolyticus (strain ATCC 43494 / DSM 8903 / Tp8T 6331) protein is Putative competence-damage inducible protein.